A 976-amino-acid polypeptide reads, in one-letter code: Protein phosphatase 1 regulatory subunit 12B (976 aa).

Over residues 1–24 (MAELEHLGGKRAESARARRAEQLR) the composition is skewed to basic and acidic residues. The tract at residues 1-52 (MAELEHLGGKRAESARARRAEQLRRWRGSLTEQEPAERQGAGRQLQTRRGSP) is disordered. S29 carries the phosphoserine modification. ANK repeat units follow at residues 57–86 (EDGA…DINT), 90–119 (DGLT…NVNQ), 123–152 (EGWT…SVGI), 216–245 (SGAT…ELNV), and 249–278 (DGWT…DMDI). Positions 342-489 (EEIPKSQDTE…LDDKDKEREN (148 aa)) are disordered. The span at 362–374 (SEEEEGEDEVSES) shows a compositional bias: acidic residues. The segment covering 375–385 (ETEKEADKKPE) has biased composition (basic and acidic residues). The span at 411-423 (FSASSARRLSSLF) shows a compositional bias: low complexity. T444 bears the Phosphothreonine mark. The segment covering 465–477 (SSIYRSSSSPRIS) has biased composition (low complexity). A compositionally biased stretch (basic and acidic residues) spans 480–489 (LDDKDKEREN). S502 is modified (phosphoserine). Residues 503–873 (STSDIEEKEN…LTSRVEEDSN (371 aa)) form a disordered region. The span at 538-564 (ETPQTIAPSTYTSTYLKRTPYKSQADS) shows a compositional bias: polar residues. A compositionally biased stretch (basic and acidic residues) spans 622-631 (VRDEEAESLR). A compositionally biased stretch (basic residues) spans 632–642 (KARSRQARQTR). T645 bears the Phosphothreonine mark. A compositionally biased stretch (basic and acidic residues) spans 655-679 (EAEKTFSRSRAERQAQEQPGEKLED). 2 stretches are compositionally biased toward polar residues: residues 722-739 (DKPT…SLYT) and 747-763 (SRAS…STHA). Residues 765 to 777 (AAKEMDTSEKGEA) show a composition bias toward basic and acidic residues. Residues 791–801 (ERRRAKDRRRG) show a composition bias toward basic residues. T802 carries the phosphothreonine modification. Residues 818–830 (EEVKEALHERLSR) are compositionally biased toward basic and acidic residues. S833 carries the post-translational modification Phosphoserine. The span at 844–860 (YSDRASARARREAREAR) shows a compositional bias: basic and acidic residues. S941 is modified (phosphoserine).

In terms of assembly, PP1 comprises a catalytic subunit, PPP1CA, PPP1CB or PPP1CC, and one or several targeting or regulatory subunits. PPP1R12B mediates binding to myosin. Isoform 3 and isoform 4 bind PPP1R12A, but not isoform 1 of PPP1R12B itself. Binds IL16.

The protein localises to the cytoplasm. It localises to the cytoskeleton. The protein resides in the stress fiber. Functionally, regulates myosin phosphatase activity. Augments Ca(2+) sensitivity of the contractile apparatus. The polypeptide is Protein phosphatase 1 regulatory subunit 12B (Ppp1r12b) (Mus musculus (Mouse)).